The primary structure comprises 856 residues: Bifunctional uridylyltransferase/uridylyl-removing enzyme (856 aa).

Positions 1–320 (MTLSAAPLQH…YCQVPRVTQH (320 aa)) are uridylyltransferase. Residues 321 to 678 (ISEYFHAVNG…ARLADDHEGL (358 aa)) are uridylyl-removing. An HD domain is found at 439-561 (VDEHILMVVR…VRTPRRLAAL (123 aa)). ACT domains are found at residues 679-760 (QVLI…LPPQ) and 788-856 (ILSI…ALRI).

The protein belongs to the GlnD family. Requires Mg(2+) as cofactor.

It catalyses the reaction [protein-PII]-L-tyrosine + UTP = [protein-PII]-uridylyl-L-tyrosine + diphosphate. It carries out the reaction [protein-PII]-uridylyl-L-tyrosine + H2O = [protein-PII]-L-tyrosine + UMP + H(+). Its activity is regulated as follows. Uridylyltransferase (UTase) activity is inhibited by glutamine, while glutamine activates uridylyl-removing (UR) activity. Functionally, modifies, by uridylylation and deuridylylation, the PII regulatory proteins (GlnB and homologs), in response to the nitrogen status of the cell that GlnD senses through the glutamine level. Under low glutamine levels, catalyzes the conversion of the PII proteins and UTP to PII-UMP and PPi, while under higher glutamine levels, GlnD hydrolyzes PII-UMP to PII and UMP (deuridylylation). Thus, controls uridylylation state and activity of the PII proteins, and plays an important role in the regulation of nitrogen assimilation and metabolism. This Chromobacterium violaceum (strain ATCC 12472 / DSM 30191 / JCM 1249 / CCUG 213 / NBRC 12614 / NCIMB 9131 / NCTC 9757 / MK) protein is Bifunctional uridylyltransferase/uridylyl-removing enzyme.